The primary structure comprises 223 residues: Transmembrane protein 235 (223 aa).

Residues 1-28 form the signal peptide; sequence MARLGALLLAAALGALLSFALLAAAVAS. Residue Asn41 is glycosylated (N-linked (GlcNAc...) asparagine). Helical transmembrane passes span 96–116, 126–146, and 176–196; these read VIVVLPLSLVLLVCGWICGLL, LLFTGCYFLLGSVLTLAGVSI, and WSMALAWGSCALEAFSGTLLL.

This sequence belongs to the PMP-22/EMP/MP20 family. N-glycosylated.

It localises to the membrane. The protein localises to the endoplasmic reticulum. The protein is Transmembrane protein 235 (TMEM235) of Homo sapiens (Human).